The primary structure comprises 610 residues: Myosin light chain kinase 2, skeletal/cardiac muscle (610 aa).

Disordered stretches follow at residues 1–168 and 196–240; these read MATE…HSPS and VSET…DTSQ. Ala-2 bears the N-acetylalanine mark. Basic and acidic residues-rich tracts occupy residues 32 to 63 and 70 to 82; these read SEKE…KKNP and KTPE…KKGD. The segment covering 94–109 has biased composition (gly residues); it reads SGEGDGGGGPAEGGTG. The span at 141 to 157 shows a compositional bias: basic and acidic residues; the sequence is GEAKAGKKAAECREAGR. Ser-160, Ser-166, and Ser-168 each carry phosphoserine. Residues 299–554 enclose the Protein kinase domain; the sequence is MNSKEALGGG…AEQCLAHPWL (256 aa). Residues 305–313 and Lys-328 each bind ATP; that span reads LGGGKFGAV. The active-site Proton acceptor is Asp-420. At Thr-459 the chain carries Phosphothreonine. Residues 588-600 are calmodulin-binding; the sequence is IAVSAANRFKKIS.

The protein belongs to the protein kinase superfamily. CAMK Ser/Thr protein kinase family. As to quaternary structure, may interact with centrin.

Its subcellular location is the cytoplasm. The catalysed reaction is L-seryl-[myosin light chain] + ATP = O-phospho-L-seryl-[myosin light chain] + ADP + H(+). It catalyses the reaction L-threonyl-[myosin light chain] + ATP = O-phospho-L-threonyl-[myosin light chain] + ADP + H(+). Functionally, implicated in the level of global muscle contraction and cardiac function. Phosphorylates a specific serine in the N-terminus of a myosin light chain. In Rattus norvegicus (Rat), this protein is Myosin light chain kinase 2, skeletal/cardiac muscle (Mylk2).